The chain runs to 342 residues: Tetraacyldisaccharide 4'-kinase (342 aa).

68–75 contacts ATP; the sequence is TVGGTGKT.

The protein belongs to the LpxK family.

It carries out the reaction a lipid A disaccharide + ATP = a lipid IVA + ADP + H(+). Its pathway is glycolipid biosynthesis; lipid IV(A) biosynthesis; lipid IV(A) from (3R)-3-hydroxytetradecanoyl-[acyl-carrier-protein] and UDP-N-acetyl-alpha-D-glucosamine: step 6/6. In terms of biological role, transfers the gamma-phosphate of ATP to the 4'-position of a tetraacyldisaccharide 1-phosphate intermediate (termed DS-1-P) to form tetraacyldisaccharide 1,4'-bis-phosphate (lipid IVA). This is Tetraacyldisaccharide 4'-kinase from Burkholderia cenocepacia (strain HI2424).